Here is a 111-residue protein sequence, read N- to C-terminus: Putative gamma-glutamylcyclotransferase BH1612 (111 aa).

14 to 17 (YGHL) lines the substrate pocket. Glu55 functions as the Proton acceptor in the catalytic mechanism.

It belongs to the gamma-glutamylcyclotransferase family.

Functionally, putative gamma-glutamylcyclotransferase. This Halalkalibacterium halodurans (strain ATCC BAA-125 / DSM 18197 / FERM 7344 / JCM 9153 / C-125) (Bacillus halodurans) protein is Putative gamma-glutamylcyclotransferase BH1612.